The primary structure comprises 331 residues: UAP56-interacting factor (331 aa).

Positions 16 to 34 match the UAP56-binding motif motif; the sequence is APDKVDMSLDDIIRLNKKE. Disordered stretches follow at residues 30–51, 63–99, and 158–193; these read LNKKEQQARRPSPGNRRPLQKG, RARGQTQRGGGVPRGAITRAGVGRGRKIPPPVGRRRG, and GQRRPYRQTDIQRGLNSTRPFQQRRRPLPPVQTQRE. Positions 166–175 are enriched in polar residues; that stretch reads TDIQRGLNST.

The protein belongs to the UIF family.

The protein localises to the nucleus. It is found in the nucleoplasm. It localises to the nucleus speckle. Functionally, required for mRNA export from the nucleus to the cytoplasm. Acts as an adapter that uses the ddx39b/uap56-nfx1 pathway to ensure efficient mRNA export and delivering to the nuclear pore. The polypeptide is UAP56-interacting factor (fyttd1) (Salmo salar (Atlantic salmon)).